Here is a 66-residue protein sequence, read N- to C-terminus: Large ribosomal subunit protein uL29 (66 aa).

It belongs to the universal ribosomal protein uL29 family.

This Bartonella quintana (strain Toulouse) (Rochalimaea quintana) protein is Large ribosomal subunit protein uL29.